We begin with the raw amino-acid sequence, 168 residues long: Group 2 truncated hemoglobin 3-1 (168 aa).

H98 provides a ligand contact to heme b.

The protein belongs to the truncated hemoglobin family. Group II subfamily. Homodimer when ferric. In terms of tissue distribution, mainly expressed in root nodules, but barely in leaves, roots, stems, flowers and fruits.

Its function is as follows. Hemoglobin-like protein that exhibits an unusual concentration-independent binding of O(2) and CO. Required for general plant development and during nodulation. May promote shoot organogenesis from root explants. The polypeptide is Group 2 truncated hemoglobin 3-1 (Lotus japonicus (Lotus corniculatus var. japonicus)).